The following is a 464-amino-acid chain: Keratin, type I cytoskeletal 28 (464 aa).

The head stretch occupies residues 1 to 85 (MSLQFSNGSR…GSEGGLLSGN (85 aa)). The tract at residues 86-121 (EKVTMQNLNDRLASYLDNVRALEEANAELERKIKGW) is coil 1A. Residues 86-401 (EKVTMQNLND…RLIDGDGNSC (316 aa)) enclose the IF rod domain. The segment at 122–143 (YEKYGPGSCRGLDHDYSRYHLT) is linker 1. A coil 1B region spans residues 144–235 (IEDLKNKIIS…KNHEEEMKAL (92 aa)). The tract at residues 236–258 (QCAAGGNVNVEMNAAPGVDLAVL) is linker 12. The segment at 259–397 (LNNMRAEYEA…ETYCRLIDGD (139 aa)) is coil 2. The tail stretch occupies residues 398-464 (GNSCSKSKGF…NGKTEQRVPF (67 aa)). Residues 443-464 (IHSIEEKTSKMTNGKTEQRVPF) are disordered.

The protein belongs to the intermediate filament family. Heterotetramer of two type I and two type II keratins. In terms of tissue distribution, strongly expressed in skin and scalp, and weak expression observed in thymus. In the hair follicle, expressed in Henle layer, Huxley layer and in the irs cuticle. Expression extends from the bulb region up to the point of differentiation into the three layers. Also present in the medulla of beard hair (at protein level).

The protein localises to the cytoplasm. Functionally, essential for the proper assembly of types I and II keratin protein complexes and the formation of keratin intermediate filaments in the inner root sheath (irs). The protein is Keratin, type I cytoskeletal 28 of Homo sapiens (Human).